A 559-amino-acid chain; its full sequence is CTP synthase (559 aa).

Positions M1–L270 are amidoligase domain. S13 provides a ligand contact to CTP. S13 lines the UTP pocket. Residues S14–I19 and D71 each bind ATP. Mg(2+) contacts are provided by D71 and E144. CTP is bound by residues D151–E153, K191–Q196, and K227. UTP is bound by residues K191–Q196 and K227. In terms of domain architecture, Glutamine amidotransferase type-1 spans T295–S548. G357 is a binding site for L-glutamine. The active-site Nucleophile; for glutamine hydrolysis is the C384. L-glutamine is bound by residues L385–Q388, E408, and R474. Active-site residues include H521 and E523.

The protein belongs to the CTP synthase family. In terms of assembly, homotetramer.

The enzyme catalyses UTP + L-glutamine + ATP + H2O = CTP + L-glutamate + ADP + phosphate + 2 H(+). It carries out the reaction L-glutamine + H2O = L-glutamate + NH4(+). The catalysed reaction is UTP + NH4(+) + ATP = CTP + ADP + phosphate + 2 H(+). The protein operates within pyrimidine metabolism; CTP biosynthesis via de novo pathway; CTP from UDP: step 2/2. Allosterically activated by GTP, when glutamine is the substrate; GTP has no effect on the reaction when ammonia is the substrate. The allosteric effector GTP functions by stabilizing the protein conformation that binds the tetrahedral intermediate(s) formed during glutamine hydrolysis. Inhibited by the product CTP, via allosteric rather than competitive inhibition. Functionally, catalyzes the ATP-dependent amination of UTP to CTP with either L-glutamine or ammonia as the source of nitrogen. Regulates intracellular CTP levels through interactions with the four ribonucleotide triphosphates. This Paracidovorax citrulli (strain AAC00-1) (Acidovorax citrulli) protein is CTP synthase.